The chain runs to 166 residues: Large ribosomal subunit protein uL10 (166 aa).

This sequence belongs to the universal ribosomal protein uL10 family. As to quaternary structure, part of the ribosomal stalk of the 50S ribosomal subunit. The N-terminus interacts with L11 and the large rRNA to form the base of the stalk. The C-terminus forms an elongated spine to which L12 dimers bind in a sequential fashion forming a multimeric L10(L12)X complex.

Forms part of the ribosomal stalk, playing a central role in the interaction of the ribosome with GTP-bound translation factors. The protein is Large ribosomal subunit protein uL10 of Streptococcus pneumoniae (strain ATCC 700669 / Spain 23F-1).